Reading from the N-terminus, the 426-residue chain is Serine--tRNA ligase (426 aa).

Residue 233–235 (TAE) participates in L-serine binding. Residue 264-266 (RSE) participates in ATP binding. Glu287 provides a ligand contact to L-serine. Position 351 to 354 (351 to 354 (EISS)) interacts with ATP. Ser387 is an L-serine binding site.

It belongs to the class-II aminoacyl-tRNA synthetase family. Type-1 seryl-tRNA synthetase subfamily. In terms of assembly, homodimer. The tRNA molecule binds across the dimer.

The protein localises to the cytoplasm. The catalysed reaction is tRNA(Ser) + L-serine + ATP = L-seryl-tRNA(Ser) + AMP + diphosphate + H(+). The enzyme catalyses tRNA(Sec) + L-serine + ATP = L-seryl-tRNA(Sec) + AMP + diphosphate + H(+). Its pathway is aminoacyl-tRNA biosynthesis; selenocysteinyl-tRNA(Sec) biosynthesis; L-seryl-tRNA(Sec) from L-serine and tRNA(Sec): step 1/1. Its function is as follows. Catalyzes the attachment of serine to tRNA(Ser). Is also able to aminoacylate tRNA(Sec) with serine, to form the misacylated tRNA L-seryl-tRNA(Sec), which will be further converted into selenocysteinyl-tRNA(Sec). The protein is Serine--tRNA ligase of Clostridium tetani (strain Massachusetts / E88).